Consider the following 70-residue polypeptide: UPF0270 protein VS_2853 (70 aa).

Belongs to the UPF0270 family.

The protein is UPF0270 protein VS_2853 of Vibrio atlanticus (strain LGP32) (Vibrio splendidus (strain Mel32)).